The following is a 152-amino-acid chain: Single-stranded DNA-binding protein, mitochondrial (152 aa).

The transit peptide at 1 to 16 (MFRRPVLQVFRQFVRH) directs the protein to the mitochondrion. In terms of domain architecture, SSB spans 30–141 (LNRVQLLGRV…IIAGKKLVVH (112 aa)). Phosphoserine occurs at positions 67 and 79. N6-acetyllysine is present on lysine 113. Lysine 122 is modified (N6-succinyllysine).

As to quaternary structure, homotetramer. Interacts with MPG/AAG, through inhibition of its glycosylase activity it potentially prevents formation of DNA breaks in ssDNA, ensuring that base removal primarily occurs in dsDNA. Interacts with POLDIP2. Interacts with PRIMPOL. Expressed in all the layers of the retina (at protein level).

The protein resides in the mitochondrion. The protein localises to the mitochondrion matrix. Its subcellular location is the mitochondrion nucleoid. Its function is as follows. Binds preferentially and cooperatively to pyrimidine rich single-stranded DNA (ss-DNA). In vitro, required to maintain the copy number of mitochondrial DNA (mtDNA) and plays a crucial role during mtDNA replication by stimulating the activity of the replisome components POLG and TWNK at the replication fork. Promotes the activity of the gamma complex polymerase POLG, largely by organizing the template DNA and eliminating secondary structures to favor ss-DNA conformations that facilitate POLG activity. In addition it is able to promote the 5'-3' unwinding activity of the mtDNA helicase TWNK. May also function in mtDNA repair. This chain is Single-stranded DNA-binding protein, mitochondrial (Ssbp1), found in Mus musculus (Mouse).